We begin with the raw amino-acid sequence, 619 residues long: MALLQIAEPGLSAAPHQHRLAVGIDLGTTNSLVATVRSGSAAVLPDETGRSLLPSVVRYGDQGVLAVGYDAQKEQNRDPHNTIVSVKRFMGRGVSDIKDAGSLPYRFVDAPGMVQLVTRAGVKSPVEVSSDILRALKERAEASLGGELTGAVITVPAYFDDAQRQATKDAARLAGLNVLRLLNEPTAAAIAYGLDNGSEGTYVVYDLGGGTLDVSILKLTRGVFEVLATSGDSALGGDDFDHRVFCWLLEQAGVTAPSAHDMRLLHTRAREAKEALTDHASTRVTAILSDGQSLDLELDQATLHAITKTLVDKTLTPVRKALRDAKIAPEDIQGVVMVGGATRMPHVQKAVADYFGRAPLTNLDPDKVVALGAAIQANVLAGNKQDDEWLLLDVLPLSLGIETMGGLTEKIIPRNSTIPVARAQDFTTFKDGQTAMSIHVLQGERELVSDCRSLAKFTLTGIPPMVAGAARIRITFQVDADGLLSVTAREQTSGVESSIEVKPSYGLSDDEISRMLSESLANVQEDIEARKLREAIVDAESLRDATLNALAQDGDLLDQAERAEVEAAVAAVASAIAEGVTRRVNEASAALNHATETFASRRMDRNIQRALKGHKITDL.

The protein belongs to the heat shock protein 70 family.

Chaperone involved in the maturation of iron-sulfur cluster-containing proteins. Has a low intrinsic ATPase activity which is markedly stimulated by HscB. This is Chaperone protein HscA homolog from Chromobacterium violaceum (strain ATCC 12472 / DSM 30191 / JCM 1249 / CCUG 213 / NBRC 12614 / NCIMB 9131 / NCTC 9757 / MK).